The sequence spans 485 residues: Glutamyl-tRNA(Gln) amidotransferase subunit A (485 aa).

Residues Lys-78 and Ser-153 each act as charge relay system in the active site. Residue Ser-177 is the Acyl-ester intermediate of the active site.

It belongs to the amidase family. GatA subfamily. Heterotrimer of A, B and C subunits.

It catalyses the reaction L-glutamyl-tRNA(Gln) + L-glutamine + ATP + H2O = L-glutaminyl-tRNA(Gln) + L-glutamate + ADP + phosphate + H(+). Allows the formation of correctly charged Gln-tRNA(Gln) through the transamidation of misacylated Glu-tRNA(Gln) in organisms which lack glutaminyl-tRNA synthetase. The reaction takes place in the presence of glutamine and ATP through an activated gamma-phospho-Glu-tRNA(Gln). The sequence is that of Glutamyl-tRNA(Gln) amidotransferase subunit A from Bacillus cereus (strain ATCC 14579 / DSM 31 / CCUG 7414 / JCM 2152 / NBRC 15305 / NCIMB 9373 / NCTC 2599 / NRRL B-3711).